Reading from the N-terminus, the 151-residue chain is Cysteine protease inhibitor 5 (151 aa).

Intrachain disulfides connect C13-C65 and C114-C120.

Belongs to the protease inhibitor I3 (leguminous Kunitz-type inhibitor) family.

Its subcellular location is the vacuole. In terms of biological role, inhibitor of cysteine proteases. May protect the plant by inhibiting proteases of invading organisms. The polypeptide is Cysteine protease inhibitor 5 (Solanum tuberosum (Potato)).